The following is a 395-amino-acid chain: NAD(P)H-quinone oxidoreductase subunit H (395 aa).

It belongs to the complex I 49 kDa subunit family. In terms of assembly, NDH-1 can be composed of about 15 different subunits; different subcomplexes with different compositions have been identified which probably have different functions.

It is found in the cellular thylakoid membrane. It catalyses the reaction a plastoquinone + NADH + (n+1) H(+)(in) = a plastoquinol + NAD(+) + n H(+)(out). The enzyme catalyses a plastoquinone + NADPH + (n+1) H(+)(in) = a plastoquinol + NADP(+) + n H(+)(out). Functionally, NDH-1 shuttles electrons from an unknown electron donor, via FMN and iron-sulfur (Fe-S) centers, to quinones in the respiratory and/or the photosynthetic chain. The immediate electron acceptor for the enzyme in this species is believed to be plastoquinone. Couples the redox reaction to proton translocation, and thus conserves the redox energy in a proton gradient. Cyanobacterial NDH-1 also plays a role in inorganic carbon-concentration. The sequence is that of NAD(P)H-quinone oxidoreductase subunit H from Prochlorococcus marinus (strain MIT 9515).